We begin with the raw amino-acid sequence, 311 residues long: Aspartate carbamoyltransferase catalytic subunit (311 aa).

Carbamoyl phosphate is bound by residues arginine 55 and threonine 56. L-aspartate is bound at residue lysine 85. Arginine 106, histidine 135, and glutamine 138 together coordinate carbamoyl phosphate. Residues arginine 168 and arginine 230 each contribute to the L-aspartate site. Positions 268 and 269 each coordinate carbamoyl phosphate.

The protein belongs to the aspartate/ornithine carbamoyltransferase superfamily. ATCase family. As to quaternary structure, heterododecamer (2C3:3R2) of six catalytic PyrB chains organized as two trimers (C3), and six regulatory PyrI chains organized as three dimers (R2).

It catalyses the reaction carbamoyl phosphate + L-aspartate = N-carbamoyl-L-aspartate + phosphate + H(+). Its pathway is pyrimidine metabolism; UMP biosynthesis via de novo pathway; (S)-dihydroorotate from bicarbonate: step 2/3. In terms of biological role, catalyzes the condensation of carbamoyl phosphate and aspartate to form carbamoyl aspartate and inorganic phosphate, the committed step in the de novo pyrimidine nucleotide biosynthesis pathway. The chain is Aspartate carbamoyltransferase catalytic subunit from Escherichia fergusonii (strain ATCC 35469 / DSM 13698 / CCUG 18766 / IAM 14443 / JCM 21226 / LMG 7866 / NBRC 102419 / NCTC 12128 / CDC 0568-73).